A 94-amino-acid polypeptide reads, in one-letter code: Progonadoliberin-3 (94 aa).

Positions 1–23 are cleaved as a signal peptide; sequence MEWKGRVLVQLLMLVCVLEVSLC. The residue at position 24 (Gln-24) is a Pyrrolidone carboxylic acid. A Glycine amide modification is found at Gly-33.

Belongs to the GnRH family.

It is found in the secreted. Functionally, stimulates the secretion of gonadotropins. This is Progonadoliberin-3 (gnrh3) from Rutilus rutilus (Roach).